Consider the following 305-residue polypeptide: Phosphatidylinositol:ceramide inositolphosphotransferase 2 (305 aa).

6 helical membrane-spanning segments follow: residues 34–54 (LLAG…VHYI), 81–101 (ETVF…PFIL), 105–125 (KIYT…CQFL), 168–188 (VMYG…LVFV), 198–218 (RFIK…IIAS), and 221–241 (HYSV…FCLD). His-180 is an active-site residue. Residues His-221 and Asp-225 contribute to the active site.

It belongs to the sphingomyelin synthase family. In terms of tissue distribution, expressed in leaves, roots, stems, flowers and siliques.

The protein localises to the golgi apparatus. It localises to the trans-Golgi network membrane. It catalyses the reaction an N-(2R-hydroxy-very-long-chain fatty acyl)-(R)-4-hydroxysphingoid base + a 1,2-diacyl-sn-glycero-3-phospho-(1D-myo-inositol) = a 1D-myo-inositol-1-phospho-N-[(R)-2-hydroxy-very-long-chain fatty acyl]-(R)-4-hydroxysphingoid base + a 1,2-diacyl-sn-glycerol. The protein operates within sphingolipid metabolism. Its function is as follows. Catalyzes the transfer of the phosphorylinositol group from phosphatidylinositol (PI) to phytoceramide, an essential step in sphingolipid biosynthesis. May play an important role in modulating plant programmed cell death (PCD) associated with defense (e.g. toward Golovinomyces cichoracearum) by promoting sphingolipid metabolism and thus regulating ceramide accumulation. This chain is Phosphatidylinositol:ceramide inositolphosphotransferase 2, found in Arabidopsis thaliana (Mouse-ear cress).